The primary structure comprises 200 residues: Dephospho-CoA kinase (200 aa).

The DPCK domain occupies 4-200 (VIGLTGGIAS…VILKNWNIID (197 aa)). 12–17 (ASGKST) provides a ligand contact to ATP.

Belongs to the CoaE family.

The protein resides in the cytoplasm. It catalyses the reaction 3'-dephospho-CoA + ATP = ADP + CoA + H(+). It participates in cofactor biosynthesis; coenzyme A biosynthesis; CoA from (R)-pantothenate: step 5/5. Functionally, catalyzes the phosphorylation of the 3'-hydroxyl group of dephosphocoenzyme A to form coenzyme A. This Bacillus cereus (strain ATCC 10987 / NRS 248) protein is Dephospho-CoA kinase.